We begin with the raw amino-acid sequence, 278 residues long: MGIRKYKPTTPGRRGSSVADFVEVTRSEPEKSLVRPLSKSGGRNSTGRITSRRRGGGHKRAYRVIDFRRHDKDGVPAKVAHIEYDPNRTARIALLHYADGEKRYIVAPNRLKQGDRIENGPAADIKPGNNLPLRNIPTGTVIHAVELRPGGGAKIARSAGSSVQLVAKDGPYAQLRMPSGEIRNVDARCRATIGEVGNAEQSNINWGKAGRMRWKGKRPSVRGVAMNPVDHPHGGGEGKTSGGRHPVSPWGQPEGRTRRPGKPSDKLIVRRRRTGKKR.

2 disordered regions span residues Met-1 to His-58 and Gly-210 to Arg-278. Residues Glu-23–Leu-33 are compositionally biased toward basic and acidic residues. The span at Ser-40–Ile-49 shows a compositional bias: low complexity. 2 stretches are compositionally biased toward basic residues: residues Gly-210–Ser-220 and Val-269–Arg-278.

This sequence belongs to the universal ribosomal protein uL2 family. In terms of assembly, part of the 50S ribosomal subunit. Forms a bridge to the 30S subunit in the 70S ribosome.

Functionally, one of the primary rRNA binding proteins. Required for association of the 30S and 50S subunits to form the 70S ribosome, for tRNA binding and peptide bond formation. It has been suggested to have peptidyltransferase activity; this is somewhat controversial. Makes several contacts with the 16S rRNA in the 70S ribosome. The polypeptide is Large ribosomal subunit protein uL2 (Beutenbergia cavernae (strain ATCC BAA-8 / DSM 12333 / CCUG 43141 / JCM 11478 / NBRC 16432 / NCIMB 13614 / HKI 0122)).